The primary structure comprises 487 residues: Argininosuccinate lyase (487 aa).

The protein belongs to the lyase 1 family. Argininosuccinate lyase subfamily.

It localises to the cytoplasm. The catalysed reaction is 2-(N(omega)-L-arginino)succinate = fumarate + L-arginine. The protein operates within amino-acid biosynthesis; L-arginine biosynthesis; L-arginine from L-ornithine and carbamoyl phosphate: step 3/3. The chain is Argininosuccinate lyase from Methanococcus aeolicus (strain ATCC BAA-1280 / DSM 17508 / OCM 812 / Nankai-3).